A 418-amino-acid chain; its full sequence is Glutamyl-tRNA reductase (418 aa).

Substrate-binding positions include 49-52 (TCNR), Ser-109, 114-116 (EPQ), and Gln-120. The active-site Nucleophile is the Cys-50. 189–194 (GAGETI) lines the NADP(+) pocket.

This sequence belongs to the glutamyl-tRNA reductase family. As to quaternary structure, homodimer.

The enzyme catalyses (S)-4-amino-5-oxopentanoate + tRNA(Glu) + NADP(+) = L-glutamyl-tRNA(Glu) + NADPH + H(+). The protein operates within porphyrin-containing compound metabolism; protoporphyrin-IX biosynthesis; 5-aminolevulinate from L-glutamyl-tRNA(Glu): step 1/2. Its function is as follows. Catalyzes the NADPH-dependent reduction of glutamyl-tRNA(Glu) to glutamate 1-semialdehyde (GSA). The sequence is that of Glutamyl-tRNA reductase from Escherichia coli O6:K15:H31 (strain 536 / UPEC).